The sequence spans 343 residues: Stimulator of interferon genes protein homolog (343 aa).

N-linked (GlcNAc...) asparagine glycosylation occurs at N84. The next 2 membrane-spanning stretches (helical) occupy residues 87 to 107 (IYLI…TGNY) and 109 to 129 (NVMP…WSFT). A 3',2'-cGAMP-binding site is contributed by N157. A glycan (N-linked (GlcNAc...) asparagine) is linked at N187. Residues 195-215 (LVILIPDEMFVNGVLESHLLD) form a helical membrane-spanning segment. R232, K235, E255, T258, and S262 together coordinate 3',2'-cGAMP. N270 and N333 each carry an N-linked (GlcNAc...) asparagine glycan.

It belongs to the STING family.

It is found in the endoplasmic reticulum membrane. Facilitator of innate immune signaling that binds cyclic dinucleotides produced in response to infection by bacteria and/or viruses, and promotes the activation of the NF-kappa-B transcription factor Rel (Relish). Recognizes and binds cyclic di-GMP (c-di-GMP), a cyclic dinucleotide messenger produced by bacteria such as L.monocytogenes, leading to activation of the peptidoglycan recognition protein (IMD) signaling pathway and activation of Rel (Relish). Innate immune response is triggered in response to double-stranded RNA from viruses delivered to the cytoplasm: Sting acts by specifically binding cyclic dinucleotides 3',2'-cGAMP and 2',3'-cGAMP produced by cGlr1 and cGlr2 in response to RNA virus in the cytosol. Has a strong preference for 3',2'-cGAMP compared to other cyclic dinucleotides such as 2',3'-cGAMP or 3'3'-c-di-GMP. Upon binding to 3',2'-cGAMP, activates an antiviral immune response, leading to the activation of Rel (Relish). Activated in brain in response to Zika virus infection, leading to autophagy. The chain is Stimulator of interferon genes protein homolog from Drosophila melanogaster (Fruit fly).